Reading from the N-terminus, the 273-residue chain is NADPH-dependent 7-cyano-7-deazaguanine reductase (273 aa).

80-82 contributes to the substrate binding site; that stretch reads VES. Residue 82 to 83 coordinates NADPH; the sequence is SK. Cys180 functions as the Thioimide intermediate in the catalytic mechanism. The active-site Proton donor is Asp187. 219 to 220 contributes to the substrate binding site; the sequence is HE. 248 to 249 provides a ligand contact to NADPH; it reads RG.

The protein belongs to the GTP cyclohydrolase I family. QueF type 2 subfamily. Homodimer.

The protein localises to the cytoplasm. It carries out the reaction 7-aminomethyl-7-carbaguanine + 2 NADP(+) = 7-cyano-7-deazaguanine + 2 NADPH + 3 H(+). Its pathway is tRNA modification; tRNA-queuosine biosynthesis. In terms of biological role, catalyzes the NADPH-dependent reduction of 7-cyano-7-deazaguanine (preQ0) to 7-aminomethyl-7-deazaguanine (preQ1). The protein is NADPH-dependent 7-cyano-7-deazaguanine reductase of Bordetella parapertussis (strain 12822 / ATCC BAA-587 / NCTC 13253).